A 433-amino-acid polypeptide reads, in one-letter code: Serine--tRNA ligase (433 aa).

235–237 (TSE) provides a ligand contact to L-serine. 266–268 (RSE) provides a ligand contact to ATP. L-serine is bound at residue glutamate 289. ATP is bound at residue 353 to 356 (EISS). Serine 388 is an L-serine binding site.

Belongs to the class-II aminoacyl-tRNA synthetase family. Type-1 seryl-tRNA synthetase subfamily. In terms of assembly, homodimer. The tRNA molecule binds across the dimer.

It localises to the cytoplasm. The enzyme catalyses tRNA(Ser) + L-serine + ATP = L-seryl-tRNA(Ser) + AMP + diphosphate + H(+). It catalyses the reaction tRNA(Sec) + L-serine + ATP = L-seryl-tRNA(Sec) + AMP + diphosphate + H(+). Its pathway is aminoacyl-tRNA biosynthesis; selenocysteinyl-tRNA(Sec) biosynthesis; L-seryl-tRNA(Sec) from L-serine and tRNA(Sec): step 1/1. Functionally, catalyzes the attachment of serine to tRNA(Ser). Is also able to aminoacylate tRNA(Sec) with serine, to form the misacylated tRNA L-seryl-tRNA(Sec), which will be further converted into selenocysteinyl-tRNA(Sec). This is Serine--tRNA ligase from Burkholderia ambifaria (strain ATCC BAA-244 / DSM 16087 / CCUG 44356 / LMG 19182 / AMMD) (Burkholderia cepacia (strain AMMD)).